Consider the following 163-residue polypeptide: MGFDINWGSALYQLLAFSVLLFFLSKFALKPLLGIMEKREQMINEQISSAEKNRKDSEAFIAEQRQALEQARMEANEIIQNAKKLSEQQGQDIVKAARNDAERIKESAVAEIQREKEQAVSALREQVAGLSVLIATKVIEKELNEAEQEKLVQEYLKEVGEEL.

Residues 10–29 (ALYQLLAFSVLLFFLSKFAL) traverse the membrane as a helical segment.

This sequence belongs to the ATPase B chain family. In terms of assembly, F-type ATPases have 2 components, F(1) - the catalytic core - and F(0) - the membrane proton channel. F(1) has five subunits: alpha(3), beta(3), gamma(1), delta(1), epsilon(1). F(0) has three main subunits: a(1), b(2) and c(10-14). The alpha and beta chains form an alternating ring which encloses part of the gamma chain. F(1) is attached to F(0) by a central stalk formed by the gamma and epsilon chains, while a peripheral stalk is formed by the delta and b chains.

The protein localises to the cell membrane. F(1)F(0) ATP synthase produces ATP from ADP in the presence of a proton or sodium gradient. F-type ATPases consist of two structural domains, F(1) containing the extramembraneous catalytic core and F(0) containing the membrane proton channel, linked together by a central stalk and a peripheral stalk. During catalysis, ATP synthesis in the catalytic domain of F(1) is coupled via a rotary mechanism of the central stalk subunits to proton translocation. In terms of biological role, component of the F(0) channel, it forms part of the peripheral stalk, linking F(1) to F(0). The polypeptide is ATP synthase subunit b (Alkalihalophilus pseudofirmus (strain ATCC BAA-2126 / JCM 17055 / OF4) (Bacillus pseudofirmus)).